The following is a 439-amino-acid chain: Trigger factor (439 aa).

A PPIase FKBP-type domain is found at 175 to 260 (GDRVTISYRS…VERLSVKDEI (86 aa)).

It belongs to the FKBP-type PPIase family. Tig subfamily.

Its subcellular location is the cytoplasm. The enzyme catalyses [protein]-peptidylproline (omega=180) = [protein]-peptidylproline (omega=0). Its function is as follows. Involved in protein export. Acts as a chaperone by maintaining the newly synthesized protein in an open conformation. Functions as a peptidyl-prolyl cis-trans isomerase. In Anaplasma phagocytophilum (strain HZ), this protein is Trigger factor.